The following is a 4243-amino-acid chain: Fibrocystin-L (4243 aa).

The signal sequence occupies residues 1-20 (MGHLWLLGIWGLCGLLLCAA). Topologically, residues 21-4210 (DPSTDGSQII…KASTVGTYAQ (4190 aa)) are extracellular. 3 consecutive IPT/TIG domains span residues 31-129 (PKVT…TCKG), 146-255 (PTIR…KMAY), and 270-361 (AEVT…ILEY). O-linked (GalNAc...) threonine glycosylation occurs at threonine 122. Residues 337–492 (PGGRGLKLEV…NVYTEQQTGD (156 aa)) form the PA14 domain. The O-linked (GalNAc...) threonine glycan is linked to threonine 445. IPT/TIG domains lie at 1067 to 1151 (PLVL…EFYF), 1155 to 1234 (SQIS…AFSY), 1240 to 1322 (PIIT…RDKL), 1330 to 1469 (LEVT…SFSY), 1566 to 1649 (PSIS…TLSN), 1659 to 1743 (PNID…TFSY), 1749 to 1828 (PYIT…NLTV), 1831 to 1910 (PPVA…LFTY), 1916 to 1997 (PFLR…VFEY), 1999 to 2085 (LNIQ…PFTY), and 2091 to 2176 (PLIT…DFLY). Threonine 1803 and threonine 1839 each carry an O-linked (GalNAc...) threonine glycan. Residues 2184–2304 (FSWGGKSPPE…VPVTWTRLAH (121 aa)) enclose the G8 1 domain. The O-linked (GalNAc...) threonine glycan is linked to threonine 2320. PbH1 repeat units follow at residues 2508–2530 (THHL…FIED), 2566–2588 (NPNN…WYRM), 2665–2687 (GGAL…ETKR), and 2733–2756 (SEGL…ALGV). A G8 2 domain is found at 3036–3174 (SFWQSSRENN…HSIYKTKLSE (139 aa)). PbH1 repeat units lie at residues 3293 to 3315 (KGNA…RDST), 3355 to 3377 (TDGL…RIWG), 3416 to 3438 (GTNT…RIDG), 3471 to 3493 (PGCS…YFQT), and 3527 to 3548 (SKNV…NCSD). The O-linked (GalNAc...) threonine glycan is linked to threonine 3736. The helical transmembrane segment at 4211–4231 (IMTVVISCLVGRMWLLEIFMA) threads the bilayer. Topologically, residues 4232-4243 (AVSTLNITLRSY) are cytoplasmic.

The protein localises to the membrane. The protein resides in the cell projection. Its subcellular location is the stereocilium membrane. Functionally, component of hair-cell stereocilia coat. Required for normal hearing. The sequence is that of Fibrocystin-L (PKHD1L1) from Homo sapiens (Human).